A 549-amino-acid chain; its full sequence is Chaperonin GroEL 3 (549 aa).

Residues 29–32 (TLGP), 86–90 (DGTTT), G414, 477–479 (NAA), and D493 each bind ATP.

This sequence belongs to the chaperonin (HSP60) family. Forms a cylinder of 14 subunits composed of two heptameric rings stacked back-to-back. Interacts with the co-chaperonin GroES.

It localises to the cytoplasm. It carries out the reaction ATP + H2O + a folded polypeptide = ADP + phosphate + an unfolded polypeptide.. Functionally, together with its co-chaperonin GroES, plays an essential role in assisting protein folding. The GroEL-GroES system forms a nano-cage that allows encapsulation of the non-native substrate proteins and provides a physical environment optimized to promote and accelerate protein folding. This Frankia casuarinae (strain DSM 45818 / CECT 9043 / HFP020203 / CcI3) protein is Chaperonin GroEL 3.